The sequence spans 197 residues: Protein GrpE (197 aa).

Basic and acidic residues predominate over residues 1–12 (MTDSDGKTDKSG). Residues 1-35 (MTDSDGKTDKSGEPAAEVEPVVSKPYVMPDDPEDD) are disordered.

It belongs to the GrpE family. In terms of assembly, homodimer.

It localises to the cytoplasm. Its function is as follows. Participates actively in the response to hyperosmotic and heat shock by preventing the aggregation of stress-denatured proteins, in association with DnaK and GrpE. It is the nucleotide exchange factor for DnaK and may function as a thermosensor. Unfolded proteins bind initially to DnaJ; upon interaction with the DnaJ-bound protein, DnaK hydrolyzes its bound ATP, resulting in the formation of a stable complex. GrpE releases ADP from DnaK; ATP binding to DnaK triggers the release of the substrate protein, thus completing the reaction cycle. Several rounds of ATP-dependent interactions between DnaJ, DnaK and GrpE are required for fully efficient folding. The polypeptide is Protein GrpE (Nitrobacter winogradskyi (strain ATCC 25391 / DSM 10237 / CIP 104748 / NCIMB 11846 / Nb-255)).